We begin with the raw amino-acid sequence, 672 residues long: Zinc finger and BTB domain-containing protein 24 (672 aa).

The BTB domain occupies 39-105 (CDITLIVEDV…MYSAVVLVDE (67 aa)). The interval 136 to 208 (HMQVKRKRGR…GKRKIKQPIR (73 aa)) is disordered. Positions 140-152 (KRKRGRPKKNQDL) form a DNA-binding region, a.T hook 1. Residues 148–158 (KNQDLSQKENP) show a composition bias toward basic and acidic residues. Residues 160-171 (SELQAQTSSEIQ) are compositionally biased toward polar residues. Residues 198–208 (EGKRKIKQPIR) show a composition bias toward basic residues. Residues 223–235 (PGKRGRRRKYPDT) constitute a DNA-binding region (a.T hook 2). 8 consecutive C2H2-type zinc fingers follow at residues 237–259 (ARCE…QRTH), 265–287 (FRCS…QRMH), 293–315 (YICT…MNLH), 321–343 (FTCE…NRVH), 349–371 (PECA…LRTH), 377–399 (FTCE…IRIH), 405–427 (YVCK…EVSH), and 433–455 (FSCS…IKTH). Residues 453–492 (KTHNKENPPAQAESTDKPPQSAPEQQEQEQQQQQQTSGDK) form a disordered region. Positions 476-487 (EQQEQEQQQQQQ) are enriched in low complexity.

The protein belongs to the krueppel C2H2-type zinc-finger protein family.

Its subcellular location is the nucleus. In terms of biological role, may be involved in BMP2-induced transcription. The chain is Zinc finger and BTB domain-containing protein 24 (zbtb24) from Danio rerio (Zebrafish).